The chain runs to 195 residues: Imidazoleglycerol-phosphate dehydratase (195 aa).

Belongs to the imidazoleglycerol-phosphate dehydratase family.

It localises to the cytoplasm. The enzyme catalyses D-erythro-1-(imidazol-4-yl)glycerol 3-phosphate = 3-(imidazol-4-yl)-2-oxopropyl phosphate + H2O. The protein operates within amino-acid biosynthesis; L-histidine biosynthesis; L-histidine from 5-phospho-alpha-D-ribose 1-diphosphate: step 6/9. The polypeptide is Imidazoleglycerol-phosphate dehydratase (Paraburkholderia phytofirmans (strain DSM 17436 / LMG 22146 / PsJN) (Burkholderia phytofirmans)).